Reading from the N-terminus, the 156-residue chain is Peptidyl-prolyl cis-trans isomerase cypE (156 aa).

In terms of domain architecture, PPIase cyclophilin-type spans 2-155 (TEQTVTLQTT…DEIRIIKATA (154 aa)).

This sequence belongs to the cyclophilin-type PPIase family. As to quaternary structure, interacts with snwA.

The protein localises to the cytoplasm. Its subcellular location is the nucleus. It carries out the reaction [protein]-peptidylproline (omega=180) = [protein]-peptidylproline (omega=0). In terms of biological role, catalyzes the cis-trans isomerization of proline imidic peptide bonds in oligopeptides. Plays a role in protein folding, transport and assembly. The chain is Peptidyl-prolyl cis-trans isomerase cypE (cypE) from Dictyostelium discoideum (Social amoeba).